Reading from the N-terminus, the 473-residue chain is Dynein axonemal assembly factor 11 (473 aa).

LRR repeat units lie at residues S22–C43, D45–K66, K67–E88, and W89–T110. The LRRCT domain occupies N123–N161. The stretch at S153–T205 forms a coiled coil. 2 stretches are compositionally biased toward basic and acidic residues: residues Q188 to K202 and E273 to S283. 3 disordered regions span residues Q188–S244, E273–P292, and V387–I473. In terms of domain architecture, CS spans V305 to K402. The segment covering T397–S408 has biased composition (low complexity). The span at K417–C431 shows a compositional bias: basic and acidic residues. Residues P456–P467 show a composition bias toward acidic residues.

It belongs to the tilB family. Interacts (via CS domain) with ZMYND10 (via C-terminus). As to expression, mainly expressed in cells with motile cilia. Expressed in epithelial cells of the trachea, testis and ependymal cells of the cerebral ventricles. In testis, abundant expression in late prophase of meiosis I with a dramatic decrease after the first meiotic division (at protein level).

Its subcellular location is the cytoplasm. It is found in the cell projection. It localises to the cilium. The protein resides in the dynein axonemal particle. The protein localises to the flagellum. Involved in dynein arm assembly, is important for expression and transporting outer dynein arm (ODA) proteins from the cytoplasm to the cilia. Acts as a crucial component in the formation and motility of spermatozoal flagella. The sequence is that of Dynein axonemal assembly factor 11 (Dnaaf11) from Mus musculus (Mouse).